The following is a 127-amino-acid chain: Aspartate 1-decarboxylase (127 aa).

S25 acts as the Schiff-base intermediate with substrate; via pyruvic acid in catalysis. S25 bears the Pyruvic acid (Ser) mark. T57 serves as a coordination point for substrate. Y58 (proton donor) is an active-site residue. 73–75 lines the substrate pocket; sequence GAA.

The protein belongs to the PanD family. Heterooctamer of four alpha and four beta subunits. It depends on pyruvate as a cofactor. Post-translationally, is synthesized initially as an inactive proenzyme, which is activated by self-cleavage at a specific serine bond to produce a beta-subunit with a hydroxyl group at its C-terminus and an alpha-subunit with a pyruvoyl group at its N-terminus.

Its subcellular location is the cytoplasm. It catalyses the reaction L-aspartate + H(+) = beta-alanine + CO2. The protein operates within cofactor biosynthesis; (R)-pantothenate biosynthesis; beta-alanine from L-aspartate: step 1/1. Its function is as follows. Catalyzes the pyruvoyl-dependent decarboxylation of aspartate to produce beta-alanine. In Listeria welshimeri serovar 6b (strain ATCC 35897 / DSM 20650 / CCUG 15529 / CIP 8149 / NCTC 11857 / SLCC 5334 / V8), this protein is Aspartate 1-decarboxylase.